Consider the following 528-residue polypeptide: Glutamyl-tRNA(Gln) amidotransferase subunit A, mitochondrial (528 aa).

The active-site Charge relay system is the Lys76. Residues 147-166 (QYREKRKQNPHSKNEDSDWL) are disordered. Ser171 acts as the Charge relay system in catalysis. Catalysis depends on Ser195, which acts as the Acyl-ester intermediate.

It belongs to the amidase family. GatA subfamily. Subunit of the heterotrimeric GatCAB amidotransferase (AdT) complex, composed of A (QRSL1), B (GATB) and C (GATC) subunits.

Its subcellular location is the mitochondrion. The enzyme catalyses L-glutamyl-tRNA(Gln) + L-glutamine + ATP + H2O = L-glutaminyl-tRNA(Gln) + L-glutamate + ADP + phosphate + H(+). In terms of biological role, allows the formation of correctly charged Gln-tRNA(Gln) through the transamidation of misacylated Glu-tRNA(Gln) in the mitochondria. The reaction takes place in the presence of glutamine and ATP through an activated gamma-phospho-Glu-tRNA(Gln). The sequence is that of Glutamyl-tRNA(Gln) amidotransferase subunit A, mitochondrial from Macaca fascicularis (Crab-eating macaque).